The primary structure comprises 418 residues: UPF0261 protein BRA1168/BS1330_II1159 (418 aa).

The protein belongs to the UPF0261 family.

The sequence is that of UPF0261 protein BRA1168/BS1330_II1159 from Brucella suis biovar 1 (strain 1330).